We begin with the raw amino-acid sequence, 299 residues long: Oxygen-dependent coproporphyrinogen-III oxidase (299 aa).

Ser92 lines the substrate pocket. A divalent metal cation-binding residues include His96 and His106. Catalysis depends on His106, which acts as the Proton donor. Substrate is bound at residue 108–110 (NVR). His145 and His175 together coordinate a divalent metal cation. Positions 240–275 (YVEFNLVWDRGTLFGLQTGGRTESILMSMPPLVRWE) are important for dimerization. Residue 258-260 (GGR) coordinates substrate.

The protein belongs to the aerobic coproporphyrinogen-III oxidase family. Homodimer. Requires a divalent metal cation as cofactor.

Its subcellular location is the cytoplasm. It carries out the reaction coproporphyrinogen III + O2 + 2 H(+) = protoporphyrinogen IX + 2 CO2 + 2 H2O. Its pathway is porphyrin-containing compound metabolism; protoporphyrin-IX biosynthesis; protoporphyrinogen-IX from coproporphyrinogen-III (O2 route): step 1/1. Functionally, involved in the heme biosynthesis. Catalyzes the aerobic oxidative decarboxylation of propionate groups of rings A and B of coproporphyrinogen-III to yield the vinyl groups in protoporphyrinogen-IX. The sequence is that of Oxygen-dependent coproporphyrinogen-III oxidase from Salmonella paratyphi B (strain ATCC BAA-1250 / SPB7).